A 437-amino-acid polypeptide reads, in one-letter code: (S)-6-hydroxynicotine oxidase (437 aa).

Residues Ser16, 35–37 (EAR), Arg43, 57–60 (GGAG), Val231, Ser405, and 413–415 (EYI) contribute to the FAD site.

Belongs to the flavin monoamine oxidase family. In terms of assembly, homodimer. FAD serves as cofactor.

The catalysed reaction is (S)-6-hydroxynicotine + O2 + H2O = 6-hydroxypseudooxynicotine + H2O2. It catalyses the reaction (S)-6-hydroxynicotine + O2 = 6-hydroxy-N-methylmyosmine + H2O2. It participates in alkaloid degradation; nicotine degradation; 6-hydroxypseudooxynicotine from nicotine (S-isomer route): step 2/2. With respect to regulation, partially inhibited by Co(2+) or Zn(2+) and significantly inhibited by Ag(+), Cu(2+) and Hg(2+). Involved in the degradation of L-nicotine. Catalyzes the oxidation of (S)-6-hydroxynicotine (6-hydroxy-L-nicotine) to 6-hydroxypseudooxynicotine. Oxidation of the pyrrolidine ring of (S)-6-hydroxynicotine leads to the formation of the optically inactive 6-hydroxy-N-methylmyosmine, which hydrolyzes spontaneously to 6-hydroxypseudooxynicotine. Acts with absolute stereospecificity on the L-form of 6-hydroxynicotine. Also involved in the degradation of nornicotine, and catalyzes the oxidation of 6-hydroxynornicotine to 6-hydroxymyosmine, which hydrolyzes to 6-hydroxypseudooxynornicotine. In vitro, converts (S)-nicotine into N-methylmyosmine, which spontaneously hydrolyzes spontaneously into pseudooxynicotine, but catalytic efficiency is about 1900-fold higher with (S)-6-hydroxynicotine. The sequence is that of (S)-6-hydroxynicotine oxidase from Shinella sp. (strain HZN7).